The following is a 197-amino-acid chain: Large ribosomal subunit protein mL58 (197 aa).

The N-terminal 20 residues, 1-20 (MLFTIKPSFLKPVGFIQTRN), are a transit peptide targeting the mitochondrion.

Belongs to the mitochondrion-specific ribosomal protein mL58 family. Component of the mitochondrial large ribosomal subunit (mt-LSU). Mature yeast 74S mitochondrial ribosomes consist of a small (37S) and a large (54S) subunit. The 37S small subunit contains a 15S ribosomal RNA (15S mt-rRNA) and at least 32 different proteins. The 54S large subunit contains a 21S rRNA (21S mt-rRNA) and at least 45 different proteins.

It localises to the mitochondrion. In terms of biological role, component of the mitochondrial ribosome (mitoribosome), a dedicated translation machinery responsible for the synthesis of mitochondrial genome-encoded proteins, including at least some of the essential transmembrane subunits of the mitochondrial respiratory chain. The mitoribosomes are attached to the mitochondrial inner membrane and translation products are cotranslationally integrated into the membrane. This Schizosaccharomyces pombe (strain 972 / ATCC 24843) (Fission yeast) protein is Large ribosomal subunit protein mL58 (mrpl20).